The chain runs to 117 residues: uncharacterized protein (117 aa).

A disordered region spans residues 16-56 (FSQSSDGRSNGGGSSSGDSVSTTSDGLLTTGTSPNTSSTSL). Low complexity predominate over residues 31 to 56 (SGDSVSTTSDGLLTTGTSPNTSSTSL).

This is an uncharacterized protein from Saccharomyces cerevisiae (strain ATCC 204508 / S288c) (Baker's yeast).